A 292-amino-acid chain; its full sequence is NAD kinase (292 aa).

Asp-73 (proton acceptor) is an active-site residue. NAD(+)-binding positions include 73–74, 147–148, His-158, Arg-175, Asp-177, 188–193, and Gln-247; these read DG, NE, and TAYSLS.

Belongs to the NAD kinase family. A divalent metal cation serves as cofactor.

Its subcellular location is the cytoplasm. The enzyme catalyses NAD(+) + ATP = ADP + NADP(+) + H(+). Involved in the regulation of the intracellular balance of NAD and NADP, and is a key enzyme in the biosynthesis of NADP. Catalyzes specifically the phosphorylation on 2'-hydroxyl of the adenosine moiety of NAD to yield NADP. The sequence is that of NAD kinase from Shigella boydii serotype 4 (strain Sb227).